We begin with the raw amino-acid sequence, 341 residues long: Anthranilate phosphoribosyltransferase (341 aa).

5-phospho-alpha-D-ribose 1-diphosphate contacts are provided by residues Gly79, 82–83, Thr87, 89–92, 107–115, and Ser119; these read GD, NIST, and KHGNRAVSS. Gly79 contacts anthranilate. Ser91 contacts Mg(2+). Position 110 (Asn110) interacts with anthranilate. Arg165 is a binding site for anthranilate. Mg(2+) is bound by residues Asp224 and Glu225.

Belongs to the anthranilate phosphoribosyltransferase family. In terms of assembly, homodimer. It depends on Mg(2+) as a cofactor.

It carries out the reaction N-(5-phospho-beta-D-ribosyl)anthranilate + diphosphate = 5-phospho-alpha-D-ribose 1-diphosphate + anthranilate. Its pathway is amino-acid biosynthesis; L-tryptophan biosynthesis; L-tryptophan from chorismate: step 2/5. Its function is as follows. Catalyzes the transfer of the phosphoribosyl group of 5-phosphorylribose-1-pyrophosphate (PRPP) to anthranilate to yield N-(5'-phosphoribosyl)-anthranilate (PRA). This chain is Anthranilate phosphoribosyltransferase, found in Bacillus mycoides (strain KBAB4) (Bacillus weihenstephanensis).